The chain runs to 102 residues: uncharacterized protein (102 aa).

This is an uncharacterized protein from Escherichia coli (strain K12).